The sequence spans 418 residues: Serine hydroxymethyltransferase (418 aa).

(6S)-5,6,7,8-tetrahydrofolate-binding positions include Leu117 and 121–123 (GHL). Lys225 is modified (N6-(pyridoxal phosphate)lysine).

Belongs to the SHMT family. As to quaternary structure, homodimer. Pyridoxal 5'-phosphate serves as cofactor.

It is found in the cytoplasm. It carries out the reaction (6R)-5,10-methylene-5,6,7,8-tetrahydrofolate + glycine + H2O = (6S)-5,6,7,8-tetrahydrofolate + L-serine. The protein operates within one-carbon metabolism; tetrahydrofolate interconversion. It functions in the pathway amino-acid biosynthesis; glycine biosynthesis; glycine from L-serine: step 1/1. Its function is as follows. Catalyzes the reversible interconversion of serine and glycine with tetrahydrofolate (THF) serving as the one-carbon carrier. This reaction serves as the major source of one-carbon groups required for the biosynthesis of purines, thymidylate, methionine, and other important biomolecules. Also exhibits THF-independent aldolase activity toward beta-hydroxyamino acids, producing glycine and aldehydes, via a retro-aldol mechanism. This Mycoplasma mobile (strain ATCC 43663 / 163K / NCTC 11711) (Mesomycoplasma mobile) protein is Serine hydroxymethyltransferase.